Here is a 299-residue protein sequence, read N- to C-terminus: Probable adenylate kinase 7, mitochondrial (299 aa).

A mitochondrion-targeting transit peptide spans 1-25 (MAGVLRLAGAARSPLARALAPAARR). Position 80–85 (80–85 (GPQKHA)) interacts with ATP. The interval 100–129 (SMGTLVRQELSPASSLYKKIANSVNEGKLV) is NMP. AMP-binding positions include R106, 127–129 (KLV), 157–160 (GIPR), and Q164. Residues R190 and 203–204 (LF) each bind ATP. Residues 193-237 (GGDICPHCGQLFDFSKTASSDRNPSLGSCTWPSQVQHAAVLGLED) form an LID region.

Belongs to the adenylate kinase family.

Its subcellular location is the mitochondrion. The enzyme catalyses AMP + ATP = 2 ADP. Catalyzes the reversible transfer of the terminal phosphate group between ATP and AMP. Plays an important role in cellular energy homeostasis and in adenine nucleotide metabolism. The chain is Probable adenylate kinase 7, mitochondrial from Oryza sativa subsp. japonica (Rice).